We begin with the raw amino-acid sequence, 284 residues long: Polyamine aminopropyltransferase (284 aa).

The 236-residue stretch at Glu2 to Lys237 folds into the PABS domain. Gln31 is an S-methyl-5'-thioadenosine binding site. Residues His62 and Asp86 each contribute to the spermidine site. Residues Glu106 and Asp137–Gly138 contribute to the S-methyl-5'-thioadenosine site. The active-site Proton acceptor is the Asp155. Asp155–Asp158 serves as a coordination point for spermidine. Pro162 provides a ligand contact to S-methyl-5'-thioadenosine.

The protein belongs to the spermidine/spermine synthase family. In terms of assembly, homodimer or homotetramer.

It localises to the cytoplasm. The enzyme catalyses S-adenosyl 3-(methylsulfanyl)propylamine + putrescine = S-methyl-5'-thioadenosine + spermidine + H(+). The protein operates within amine and polyamine biosynthesis; spermidine biosynthesis; spermidine from putrescine: step 1/1. Catalyzes the irreversible transfer of a propylamine group from the amino donor S-adenosylmethioninamine (decarboxy-AdoMet) to putrescine (1,4-diaminobutane) to yield spermidine. The sequence is that of Polyamine aminopropyltransferase from Clostridium botulinum (strain Alaska E43 / Type E3).